A 432-amino-acid chain; its full sequence is Adenylosuccinate synthetase 2 (432 aa).

GTP is bound by residues 12-18 (GDEGKGR) and 40-42 (GHT). The active-site Proton acceptor is D13. D13 and G40 together coordinate Mg(2+). IMP contacts are provided by residues 13-16 (DEGK), 38-41 (NAGH), T128, R142, Q222, T237, and R301. H41 acts as the Proton donor in catalysis. 297–303 (VNTGRPR) is a binding site for substrate. Residues R303, 329–331 (KLD), and 411–413 (TTG) contribute to the GTP site.

The protein belongs to the adenylosuccinate synthetase family. In terms of assembly, homodimer. The cofactor is Mg(2+).

The protein resides in the cytoplasm. It carries out the reaction IMP + L-aspartate + GTP = N(6)-(1,2-dicarboxyethyl)-AMP + GDP + phosphate + 2 H(+). It functions in the pathway purine metabolism; AMP biosynthesis via de novo pathway; AMP from IMP: step 1/2. Its function is as follows. Plays an important role in the de novo pathway of purine nucleotide biosynthesis. Catalyzes the first committed step in the biosynthesis of AMP from IMP. In Burkholderia lata (strain ATCC 17760 / DSM 23089 / LMG 22485 / NCIMB 9086 / R18194 / 383), this protein is Adenylosuccinate synthetase 2.